We begin with the raw amino-acid sequence, 182 residues long: Protein Syd (182 aa).

It belongs to the Syd family.

The protein localises to the cell inner membrane. Its function is as follows. Interacts with the SecY protein in vivo. May bind preferentially to an uncomplexed state of SecY, thus functioning either as a chelating agent for excess SecY in the cell or as a regulatory factor that negatively controls the translocase function. The protein is Protein Syd of Pectobacterium carotovorum subsp. carotovorum (strain PC1).